The primary structure comprises 696 residues: Transcriptional regulatory protein pro1 (696 aa).

The disordered stretch occupies residues 1 to 48; that stretch reads MSTQSPNHHEDITKTSSVNMTTTTTTTKTKAAAKAGTNAAPKQKTQMH. Residues 21-40 show a composition bias toward low complexity; it reads TTTTTTTKTKAAAKAGTNAA. A DNA-binding region (zn(2)-C6 fungal-type) is located at residues 55 to 82; it reads CYTCRLRRKKCDEGSPMCTACKHLGLCC. Residues 112–145 form a disordered region; that stretch reads LSEKSSHTIQTSINTPPGLSHSLPTSATFSDPLD. The segment covering 118 to 140 has biased composition (polar residues); it reads HTIQTSINTPPGLSHSLPTSATF.

The protein localises to the nucleus. In terms of biological role, may be involved in fruiting body development. This is Transcriptional regulatory protein pro1 (adv-1) from Neurospora crassa (strain ATCC 24698 / 74-OR23-1A / CBS 708.71 / DSM 1257 / FGSC 987).